We begin with the raw amino-acid sequence, 539 residues long: MKTDILIIGGGGAAARAAIECRDKNVIIAVKGLFGKSGCTVMAEGGYNAVFNPKDSFKKHFYDTVKGGGFINNPKLVEILVKNAPKELLNLERFGALFDRTEDGFIAQRPFGGQSFNRTCYCGDRTGHEIMRGLMEYISKFERIKILEEVMAIKLIVKDNRCYGAIFLDLKTGNIFPIFAKATILATGGAGQLYPITSNPIQKTGDGFAIAYNEGAELIDMEMVQFHPTGMVGTGILVTEAVRGEGGILYNKYKERFMVRYDKERMELSTRDVVARAIYKEIQEGRGVNGGVYLDVSHLPNEVIEKKLETMLKQFLRVGIDIRKEPMIVSPTAHHFMGGLKINERCETNIIGLFACGEVTGGVHGANRLGGNALADTQVFGAIAGKSAKEFVENHDFNNIDAEEDVAKILEEINSLKGDLNVYNLIEDLRKVMWDYVSIIRNEDGLKKALEKIDEIERNIDNVKVNGIIDLQNYFELKNMVVVAKLVTKSALYRKESRGAHYREDFPETKEEWRGNIIIKGKKMWFEKLDYSVFQNFLE.

6-20 (LIIGGGGAAARAAIE) lines the FAD pocket. Catalysis depends on residues His-227 and Arg-243.

The protein belongs to the FAD-dependent oxidoreductase 2 family. FRD/SDH subfamily. FAD is required as a cofactor.

This is an uncharacterized protein from Methanocaldococcus jannaschii (strain ATCC 43067 / DSM 2661 / JAL-1 / JCM 10045 / NBRC 100440) (Methanococcus jannaschii).